Consider the following 346-residue polypeptide: MLKVAIVGASGYTGIELLRLLHGHPEVSVTCVTSEQSAGKNVAEIFPTLRSRYNLVLENLEPVRIAERADFIFTALPHKAAMEVVPTFLKLGKRVVDLSADYRLHDAREYAAWYEPHMNPELLKEAIYGLPELRREKIAEADLVANPGCYPTSIILGLAPLLKKKLVNPATIIADAKSGVSGAGRSAKVDNLYCEVNDGFKAYGVGGVHRHIPEIEQELSLLAGKQLTITFTPHLVPMDRGILSTIYAEPAGEVSLAGLVELYRDFYHGEAFVRVLPENNFPSTAFVRGSNFCDIGLTVDKRTGRIVIVSAIDNLIKGASGQAIQNMNIMNGFPENLGLESLGLFP.

Cysteine 149 is an active-site residue.

This sequence belongs to the NAGSA dehydrogenase family. Type 1 subfamily.

The protein localises to the cytoplasm. The enzyme catalyses N-acetyl-L-glutamate 5-semialdehyde + phosphate + NADP(+) = N-acetyl-L-glutamyl 5-phosphate + NADPH + H(+). It functions in the pathway amino-acid biosynthesis; L-arginine biosynthesis; N(2)-acetyl-L-ornithine from L-glutamate: step 3/4. In terms of biological role, catalyzes the NADPH-dependent reduction of N-acetyl-5-glutamyl phosphate to yield N-acetyl-L-glutamate 5-semialdehyde. This chain is N-acetyl-gamma-glutamyl-phosphate reductase, found in Geotalea daltonii (strain DSM 22248 / JCM 15807 / FRC-32) (Geobacter daltonii).